A 437-amino-acid chain; its full sequence is GTPase Der (437 aa).

EngA-type G domains are found at residues 3-167 (ALVA…PAEN) and 177-353 (PRIA…AHRS). Residues 9–16 (GRPNVGKS), 56–60 (DTGGW), 119–122 (NKVD), 183–190 (GRPNAGKS), 230–234 (DTAGI), and 295–298 (NKWD) each bind GTP. In terms of domain architecture, KH-like spans 354–437 (TRIPTHKLNE…TPINIFIREK (84 aa)).

The protein belongs to the TRAFAC class TrmE-Era-EngA-EngB-Septin-like GTPase superfamily. EngA (Der) GTPase family. Associates with the 50S ribosomal subunit.

In terms of biological role, GTPase that plays an essential role in the late steps of ribosome biogenesis. In Porphyromonas gingivalis (strain ATCC BAA-308 / W83), this protein is GTPase Der.